The primary structure comprises 130 residues: Small ribosomal subunit protein uS9 (130 aa).

It belongs to the universal ribosomal protein uS9 family.

The protein is Small ribosomal subunit protein uS9 of Anoxybacillus flavithermus (strain DSM 21510 / WK1).